The sequence spans 184 residues: TRAF-interacting protein with FHA domain-containing protein A (184 aa).

Threonine 9 carries the post-translational modification Phosphothreonine. One can recognise an FHA domain in the interval 47–103; the sequence is VKFGRNSNMCQYTFQDKQVSRIQFVLQPFKQFNSSVLSFEIKNMSKKTSLMVDNQEL. Positions 152 to 184 are disordered; it reads NNWPTQNPIPEDGMYSSYFTHRSSPSEMDENEL. The segment covering 168–177 has biased composition (polar residues); sequence SYFTHRSSPS.

This sequence belongs to the TIFA family. Homooligomer; homooligomerizes following phosphorylation at Thr-9. Interacts with IRAK1, TRAF2 and TRAF6. Interacts with TIFAB; binding to TIFAB inhibits TRAF6 activation, possibly by inducing a conformational change in TIFA. Interacts with ZCCHC11; binding to ZCCHC11 suppresses the TRAF6-dependent activation of NF-kappa-B. In terms of processing, phosphorylated at Thr-9 following detection of ADP-D-glycero-beta-D-manno-heptose (ADP-Heptose) by ALPK1. Phosphorylation at Thr-9 by ALPK1 leads to the formation of an intermolecular binding between the FHA domain and phosphorylated Thr-9, promoting TIFA oligomerization and TIFA-mediated NF-kappa-B activation. As to expression, highly expressed in the spleen and at lower levels in heart, brain, lung, liver, kidney and testes.

The protein localises to the cytoplasm. Adapter molecule that plays a key role in the activation of pro-inflammatory NF-kappa-B signaling following detection of bacterial pathogen-associated molecular pattern metabolites (PAMPs). Promotes activation of an innate immune response by inducing the oligomerization and polyubiquitination of TRAF6, which leads to the activation of TAK1 and IKK through a proteasome-independent mechanism. TIFA-dependent innate immune response is triggered by ADP-D-glycero-beta-D-manno-heptose (ADP-Heptose), a potent PAMP present in all Gram-negative and some Gram-positive bacteria: ADP-Heptose is recognized by ALPK1, which phosphorylates TIFA at Thr-9, leading to TIFA homooligomerization and subsequent activation of pro-inflammatory NF-kappa-B signaling. This is TRAF-interacting protein with FHA domain-containing protein A from Mus musculus (Mouse).